The chain runs to 284 residues: Putative cysteine-rich repeat secretory protein 7 (284 aa).

An N-terminal signal peptide occupies residues 1-24 (MARIILTAPLFYFFFSLLSHQTMS). 2 consecutive Gnk2-homologous domains span residues 26–128 (PQHM…NVSF) and 134–244 (SKPV…TFVL). Positions 247–284 (PAPSPSSLPPISPTSSPPLSLPPQLPPPLSQPPPPLST) are disordered.

It belongs to the cysteine-rich repeat secretory protein family.

It localises to the secreted. This chain is Putative cysteine-rich repeat secretory protein 7 (CRRSP7), found in Arabidopsis thaliana (Mouse-ear cress).